The sequence spans 314 residues: Nodulation protein D 2 (314 aa).

In terms of domain architecture, HTH lysR-type spans 6–63 (LDLNLLVVLDALMTERNLTAAARSINLSQPAMSAAVARLRTNFRDDLFAMAGREFIPT). Residues 23-42 (LTAAARSINLSQPAMSAAVA) constitute a DNA-binding region (H-T-H motif).

It belongs to the LysR transcriptional regulatory family.

Functionally, nodD regulates the expression of the nodABCFE genes which encode other nodulation proteins. NodD is also a negative regulator of its own expression. Binds flavonoids as inducers. This Rhizobium tropici protein is Nodulation protein D 2 (nodD2).